The chain runs to 81 residues: Photosystem I iron-sulfur center (81 aa).

2 consecutive 4Fe-4S ferredoxin-type domains span residues 2–31 and 39–68; these read SHSV…MIPW and IASA…VRVY. Positions 11, 14, 17, 21, 48, 51, 54, and 58 each coordinate [4Fe-4S] cluster.

The eukaryotic PSI reaction center is composed of at least 11 subunits. Requires [4Fe-4S] cluster as cofactor.

The protein resides in the plastid. Its subcellular location is the chloroplast thylakoid membrane. The enzyme catalyses reduced [plastocyanin] + hnu + oxidized [2Fe-2S]-[ferredoxin] = oxidized [plastocyanin] + reduced [2Fe-2S]-[ferredoxin]. Functionally, apoprotein for the two 4Fe-4S centers FA and FB of photosystem I (PSI); essential for photochemical activity. FB is the terminal electron acceptor of PSI, donating electrons to ferredoxin. The C-terminus interacts with PsaA/B/D and helps assemble the protein into the PSI complex. Required for binding of PsaD and PsaE to PSI. PSI is a plastocyanin-ferredoxin oxidoreductase, converting photonic excitation into a charge separation, which transfers an electron from the donor P700 chlorophyll pair to the spectroscopically characterized acceptors A0, A1, FX, FA and FB in turn. The protein is Photosystem I iron-sulfur center of Triticum aestivum (Wheat).